We begin with the raw amino-acid sequence, 253 residues long: Glucosamine-6-phosphate deaminase (253 aa).

Catalysis depends on aspartate 67, which acts as the Proton acceptor; for enolization step. The For ring-opening step role is filled by asparagine 136. Catalysis depends on histidine 138, which acts as the Proton acceptor; for ring-opening step. The active-site For ring-opening step is the glutamate 143.

The protein belongs to the glucosamine/galactosamine-6-phosphate isomerase family. NagB subfamily.

It catalyses the reaction alpha-D-glucosamine 6-phosphate + H2O = beta-D-fructose 6-phosphate + NH4(+). It functions in the pathway amino-sugar metabolism; N-acetylneuraminate degradation; D-fructose 6-phosphate from N-acetylneuraminate: step 5/5. Functionally, catalyzes the reversible isomerization-deamination of glucosamine 6-phosphate (GlcN6P) to form fructose 6-phosphate (Fru6P) and ammonium ion. The sequence is that of Glucosamine-6-phosphate deaminase from Thermoanaerobacter pseudethanolicus (strain ATCC 33223 / 39E) (Clostridium thermohydrosulfuricum).